The chain runs to 300 residues: Cation-efflux pump FieF (300 aa).

4 helical membrane passes run 12 to 32 (AAIA…FAWW), 39 to 59 (ILAA…NLLV), 82 to 102 (AALA…LTGI), and 114 to 134 (PGVG…LVSF). Asp-45 and Asp-49 together coordinate Zn(2+). Zn(2+)-binding residues include His-153 and Asp-157. 2 consecutive transmembrane segments (helical) span residues 156 to 176 (SDVM…YGWH) and 178 to 198 (ADAL…LRMG).

Belongs to the cation diffusion facilitator (CDF) transporter (TC 2.A.4) family. FieF subfamily. As to quaternary structure, homodimer.

It localises to the cell inner membrane. It carries out the reaction Zn(2+)(in) + H(+)(out) = Zn(2+)(out) + H(+)(in). The enzyme catalyses Cd(2+)(in) + H(+)(out) = Cd(2+)(out) + H(+)(in). It catalyses the reaction Fe(2+)(in) + H(+)(out) = Fe(2+)(out) + H(+)(in). In terms of biological role, divalent metal cation transporter which exports Zn(2+), Cd(2+) and possibly Fe(2+). May be involved in zinc and iron detoxification by efflux. In Shigella flexneri serotype 5b (strain 8401), this protein is Cation-efflux pump FieF.